The sequence spans 509 residues: Glutamyl-tRNA(Gln) amidotransferase subunit B, mitochondrial (509 aa).

This sequence belongs to the GatB/GatE family. GatB subfamily. In terms of assembly, subunit of the heterotrimeric GatFAB amidotransferase (AdT) complex, composed of A, B and F subunits.

It is found in the mitochondrion. The catalysed reaction is L-glutamyl-tRNA(Gln) + L-glutamine + ATP + H2O = L-glutaminyl-tRNA(Gln) + L-glutamate + ADP + phosphate + H(+). In terms of biological role, allows the formation of correctly charged Gln-tRNA(Gln) through the transamidation of misacylated Glu-tRNA(Gln) in the mitochondria. The reaction takes place in the presence of glutamine and ATP through an activated gamma-phospho-Glu-tRNA(Gln). This Candida dubliniensis (strain CD36 / ATCC MYA-646 / CBS 7987 / NCPF 3949 / NRRL Y-17841) (Yeast) protein is Glutamyl-tRNA(Gln) amidotransferase subunit B, mitochondrial.